Consider the following 226-residue polypeptide: 2-amino-5-formylamino-6-ribosylaminopyrimidin-4(3H)-one 5'-monophosphate deformylase (226 aa).

Residues Glu-29, His-31, Asp-40, and His-108 each coordinate Fe cation.

Belongs to the creatininase superfamily. FAPy deformylase family. Homodimer. Fe(2+) is required as a cofactor. The cofactor is Zn(2+).

The catalysed reaction is 2-amino-5-formylamino-6-(5-phospho-D-ribosylamino)pyrimidin-4(3H)-one + H2O = 2,5-diamino-6-(1-D-ribosylamino)pyrimidin-4(3H)-one 5'-phosphate + formate + H(+). Its pathway is cofactor biosynthesis; coenzyme F420 biosynthesis. It participates in cofactor biosynthesis; riboflavin biosynthesis. In terms of biological role, catalyzes the hydrolysis of the formamide of 2-amino-5-formylamino-6-ribosylamino-4(3H)-pyrimidinone 5'-monophosphate (FAPy) to form 2,5-diamino-6-ribosylamino-4(3H)-pyrimidinone 5'-phosphate (APy). In Methanocaldococcus vulcanius (strain ATCC 700851 / DSM 12094 / M7) (Methanococcus vulcanius), this protein is 2-amino-5-formylamino-6-ribosylaminopyrimidin-4(3H)-one 5'-monophosphate deformylase.